The primary structure comprises 377 residues: RNA polymerase sigma factor SigA (377 aa).

Residues 72–92 are disordered; that stretch reads EVSNLRQGEDHDGNDNDDFNF. The sigma-70 factor domain-2 stretch occupies residues 144–214; the sequence is LAEANLRLVV…TRAIADQART (71 aa). The Interaction with polymerase core subunit RpoC signature appears at 168–171; sequence DLIQ. The segment at 223-299 is sigma-70 factor domain-3; it reads ETINKLIRVS…DQEALTPADA (77 aa). The segment at 312–365 is sigma-70 factor domain-4; sequence VLDTLTEREENVLRLRFGLDDGRTRTLEEVGKVFGVTRERIRQIEAKALRKLRH. A DNA-binding region (H-T-H motif) is located at residues 338 to 357; the sequence is LEEVGKVFGVTRERIRQIEA.

This sequence belongs to the sigma-70 factor family. RpoD/SigA subfamily. As to quaternary structure, interacts transiently with the RNA polymerase catalytic core.

It localises to the cytoplasm. Its function is as follows. Sigma factors are initiation factors that promote the attachment of RNA polymerase to specific initiation sites and are then released. This sigma factor is the primary sigma factor during exponential growth. The polypeptide is RNA polymerase sigma factor SigA (Bacillus sp).